Consider the following 371-residue polypeptide: Cytochrome b (371 aa).

8 helical membrane-spanning segments follow: residues Phe-25–Val-45, Trp-69–Ile-90, Trp-105–Xaa-125, Xaa-170–Xaa-190, Tyr-218–Leu-238, Leu-280–His-300, Ile-312–Thr-332, and Phe-339–Pro-358. Positions 75 and 89 each coordinate heme b. Heme b is bound by residues Xaa-174 and Xaa-188.

This sequence belongs to the cytochrome b family. The cytochrome bc1 complex contains 3 respiratory subunits (MT-CYB, CYC1 and UQCRFS1), 2 core proteins (UQCRC1 and UQCRC2) and probably 6 low-molecular weight proteins. It depends on heme b as a cofactor.

The protein localises to the mitochondrion inner membrane. Component of the ubiquinol-cytochrome c reductase complex (complex III or cytochrome b-c1 complex) that is part of the mitochondrial respiratory chain. The b-c1 complex mediates electron transfer from ubiquinol to cytochrome c. Contributes to the generation of a proton gradient across the mitochondrial membrane that is then used for ATP synthesis. This is Cytochrome b (MT-CYB) from Eryx tataricus (Tartar sand boa).